Reading from the N-terminus, the 328-residue chain is D-cysteine desulfhydrase (328 aa).

Lys-51 bears the N6-(pyridoxal phosphate)lysine mark.

It belongs to the ACC deaminase/D-cysteine desulfhydrase family. In terms of assembly, homodimer. The cofactor is pyridoxal 5'-phosphate.

The catalysed reaction is D-cysteine + H2O = hydrogen sulfide + pyruvate + NH4(+) + H(+). Catalyzes the alpha,beta-elimination reaction of D-cysteine and of several D-cysteine derivatives. It could be a defense mechanism against D-cysteine. The chain is D-cysteine desulfhydrase from Salmonella typhimurium (strain LT2 / SGSC1412 / ATCC 700720).